A 289-amino-acid chain; its full sequence is MAWRNRRGALRAILSGSHCTRPASVYDPISMRIADDLGFEVGMFGGSVASLAILGDPDIALITLTELAEQVRRMSRAAALPVLVDADHGYGNALNVRRTVQELEAAGAAGLTIEDTLLPQAFGETQPQLISLAEGQGKINAALDARGDPSLVIIGRTGALAITSLDDAIERAQAYQAAGVDALFFTGVKTRPQLDAIAAATTLPIVLGGPSEAITDWDYLAERRVRIAVQGHAPIAAATRAVFETLQAVRNGAAPKQLSGLAAAELMQRVTRGDVVDERCDHFLGLKRS.

Ser-47 lines the substrate pocket. Asp-85 is a Mg(2+) binding site. Substrate is bound by residues Arg-156 and His-232.

Belongs to the isocitrate lyase/PEP mutase superfamily. Oxaloacetate decarboxylase family. In terms of assembly, homotetramer; dimer of dimers. It depends on Mg(2+) as a cofactor.

It carries out the reaction oxaloacetate + H(+) = pyruvate + CO2. Functionally, catalyzes the decarboxylation of oxaloacetate into pyruvate. Seems to play a role in maintaining cellular concentrations of bicarbonate and pyruvate. The polypeptide is Oxaloacetate decarboxylase (Rhodopseudomonas palustris (strain BisA53)).